Reading from the N-terminus, the 505-residue chain is MASIDFRNKINWHRRYRSPQGVKTEHEILRIFESDRGRIINSPAIRRLQQKTQVFPLERNAAVRTRLTHSMEVQQVGRYIAKEILSRLKEQNRLEEYGLDALTGPFESIVEMACLMHDIGNPPFGHFGEAAINDWFRQRLHPEDAESQPLTHDRCVVSSLRLQEGEENLNDIRRKVRQDICHFEGNAQGIRLVHTLMRMNLTWAQVGGILKYTRPAWWRGPVPDSHHYLMKKPGYYLSEEKYIARLRKELQLAPYSRFPLTWIMEAADDISYCVADLEDAVEKRIFSVEQLYHHLYHAWGHHEKDSLFELVVGNAWEKSRANTLSRSTEDQFFMYLRVNTLNKLVPYAAQRFIDNLPQIFAGTFNQALLEDASGFSRLLELYKNVAVEHVFSHPDVEQLELQGYRVISGLLDIYQPLLSLSLNDFRELVEKERLKRFPIESRLFQKLSTRHRLAYVEVVSKLPTDSAEYPVLEYYYRCRLIQDYISGMTDLYAWDEYRRLMAVEQ.

Residues 66–273 (RLTHSMEVQQ…MEAADDISYC (208 aa)) form the HD domain.

Belongs to the dGTPase family. Type 1 subfamily. In terms of assembly, homotetramer. It depends on Mg(2+) as a cofactor.

The catalysed reaction is dGTP + H2O = 2'-deoxyguanosine + triphosphate + H(+). Its function is as follows. dGTPase preferentially hydrolyzes dGTP over the other canonical NTPs. This Salmonella choleraesuis (strain SC-B67) protein is Deoxyguanosinetriphosphate triphosphohydrolase.